The chain runs to 145 residues: Small ribosomal subunit protein bS6 (145 aa).

The protein belongs to the bacterial ribosomal protein bS6 family.

Binds together with bS18 to 16S ribosomal RNA. This Mycoplasmopsis agalactiae (strain NCTC 10123 / CIP 59.7 / PG2) (Mycoplasma agalactiae) protein is Small ribosomal subunit protein bS6.